A 193-amino-acid chain; its full sequence is BH3-interacting domain death agonist (193 aa).

Residues 87-101 (IAAQLAEIGDQLDKQ) carry the BH3 motif.

In terms of assembly, forms heterodimers either with the pro-apoptotic protein BAX or the anti-apoptotic protein Bcl-2.

It localises to the cytoplasm. Its subcellular location is the mitochondrion outer membrane. Induces caspases and apoptosis. Counters the protective effect of Bcl-2. The protein is BH3-interacting domain death agonist (BID) of Gallus gallus (Chicken).